A 1135-amino-acid chain; its full sequence is DNA-directed RNA polymerase I subunit RPA2 (1135 aa).

Residues 1-24 (MDPGSRWRNLPSGPSLKHLTDPSY) are disordered. Arginine 180 contributes to the RNA binding site. The tract at residues 194 to 208 (IRPKWKTRGPGYTQY) is loop B. The interval 236-247 (LNFIYRKELFFL) is loop A. Aspartate 367 is an RNA binding site. 2 fork loop regions span residues 439 to 453 (LRSK…DSGL) and 474 to 489 (RGAD…VRRL). Aspartate 755 lines the Mg(2+) pocket. Lysine 890 provides a ligand contact to RNA. Positions 1020 and 1036 each coordinate DNA. Residue serine 1051 is modified to Phosphoserine. Residues cysteine 1070, cysteine 1073, cysteine 1098, and cysteine 1101 each coordinate Zn(2+). The C4-type zinc finger occupies 1070-1101 (CVKCGSLLSPLLEKPPPSWSAMRNRKYNCTLC).

Belongs to the RNA polymerase beta chain family. As to quaternary structure, component of the RNA polymerase I (Pol I) complex consisting of 13 subunits: a ten-subunit catalytic core composed of POLR1A/RPA1, POLR1B/RPA2, POLR1C/RPAC1, POLR1D/RPAC2, POLR1H/RPA12, POLR2E/RPABC1, POLR2F/RPABC2, POLR2H/RPABC3, POLR2K/RPABC4 and POLR2L/RPABC5; a mobile stalk subunit POLR1F/RPA43 protruding from the core and additional subunits homologous to general transcription factors POLR1E/RPA49 and POLR1G/RPA34. Part of Pol I pre-initiation complex (PIC), in which Pol I core assembles with RRN3 and promoter-bound UTBF and SL1/TIF-IB complex. Mg(2+) is required as a cofactor.

The protein resides in the nucleus. Its subcellular location is the nucleolus. It is found in the chromosome. It catalyses the reaction RNA(n) + a ribonucleoside 5'-triphosphate = RNA(n+1) + diphosphate. Functionally, catalytic core component of RNA polymerase I (Pol I), a DNA-dependent RNA polymerase which synthesizes ribosomal RNA precursors using the four ribonucleoside triphosphates as substrates. Transcribes 47S pre-rRNAs from multicopy rRNA gene clusters, giving rise to 5.8S, 18S and 28S ribosomal RNAs. Pol I-mediated transcription cycle proceeds through transcription initiation, transcription elongation and transcription termination stages. During transcription initiation, Pol I pre-initiation complex (PIC) is recruited by the selectivity factor 1 (SL1/TIF-IB) complex bound to the core promoter that precedes an rDNA repeat unit. The PIC assembly bends the promoter favoring the formation of the transcription bubble and promoter escape. Once the polymerase has escaped from the promoter it enters the elongation phase during which RNA is actively polymerized, based on complementarity with the template DNA strand. Highly processive, assembles in structures referred to as 'Miller trees' where many elongating Pol I complexes queue and transcribe the same rDNA coding regions. At terminator sequences downstream of the rDNA gene, PTRF interacts with Pol I and halts Pol I transcription leading to the release of the RNA transcript and polymerase from the DNA. Forms Pol I active center together with the largest subunit POLR1A/RPA1. Appends one nucleotide at a time to the 3' end of the nascent RNA, with POLR1A/RPA1 contributing a Mg(2+)-coordinating DxDGD motif, and POLR1B/RPA2 participating in the coordination of a second Mg(2+) ion and providing lysine residues believed to facilitate Watson-Crick base pairing between the incoming nucleotide and the template base. Typically, Mg(2+) ions direct a 5' nucleoside triphosphate to form a phosphodiester bond with the 3' hydroxyl of the preceding nucleotide of the nascent RNA, with the elimination of pyrophosphate. Has proofreading activity: Pauses and backtracks to allow the cleavage of a missincorporated nucleotide via POLR1H/RPA12. High Pol I processivity is associated with decreased transcription fidelity. This Homo sapiens (Human) protein is DNA-directed RNA polymerase I subunit RPA2.